We begin with the raw amino-acid sequence, 398 residues long: MKGSAVTGPFGLSAALSEREQAGLLRSRIATDGASGGRLRVAGRDYLNFSANDYLGLAGHSAIKTAFQGGIDRYGAGAGASPLVTGYSRAHQQLEETLADWLGVEAVLLFNCGFSANQAVLKALLGKDHLLWQDKLNHASLQEMGSQLPCKMKRFGHNDMTALERQLEPNRGLIVSEGVFSMDGDQGSWRELAALAAQSGNWLMIDDAHGLGVLGSEGRGTLAAQGVAPASVHIQMGTFGKALGVAGAFVGGSRELVDYLVNFARHYVYSTHMPAAQACAVSQSIELVRAADEARAHLGQLITRFRQGAQALGWQLGASDTPIQPLLVGESGAALQLAERLRECGVWAGAIRPPTVPVGTARLRITLSAAHREQDVDRLLEALGPRPSTDERGGAHGA.

A substrate-binding site is contributed by arginine 26. 113 to 114 contributes to the pyridoxal 5'-phosphate binding site; sequence GF. Histidine 138 lines the substrate pocket. Serine 181, histidine 209, and threonine 238 together coordinate pyridoxal 5'-phosphate. Lysine 241 is subject to N6-(pyridoxal phosphate)lysine. Position 355 (threonine 355) interacts with substrate.

It belongs to the class-II pyridoxal-phosphate-dependent aminotransferase family. BioF subfamily. As to quaternary structure, homodimer. Pyridoxal 5'-phosphate is required as a cofactor.

It carries out the reaction 6-carboxyhexanoyl-[ACP] + L-alanine + H(+) = (8S)-8-amino-7-oxononanoate + holo-[ACP] + CO2. The protein operates within cofactor biosynthesis; biotin biosynthesis. In terms of biological role, catalyzes the decarboxylative condensation of pimeloyl-[acyl-carrier protein] and L-alanine to produce 8-amino-7-oxononanoate (AON), [acyl-carrier protein], and carbon dioxide. This is 8-amino-7-oxononanoate synthase from Aeromonas hydrophila subsp. hydrophila (strain ATCC 7966 / DSM 30187 / BCRC 13018 / CCUG 14551 / JCM 1027 / KCTC 2358 / NCIMB 9240 / NCTC 8049).